The following is an 855-amino-acid chain: DNA mismatch repair protein MutS (855 aa).

Glycine 616–serine 623 serves as a coordination point for ATP.

The protein belongs to the DNA mismatch repair MutS family.

This protein is involved in the repair of mismatches in DNA. It is possible that it carries out the mismatch recognition step. This protein has a weak ATPase activity. The sequence is that of DNA mismatch repair protein MutS from Salmonella dublin (strain CT_02021853).